The following is a 262-amino-acid chain: DNA-directed RNA polymerase subunit Rpo3 (262 aa).

It belongs to the archaeal Rpo3/eukaryotic RPB3 RNA polymerase subunit family. Part of the RNA polymerase complex.

The protein localises to the cytoplasm. The enzyme catalyses RNA(n) + a ribonucleoside 5'-triphosphate = RNA(n+1) + diphosphate. Functionally, DNA-dependent RNA polymerase (RNAP) catalyzes the transcription of DNA into RNA using the four ribonucleoside triphosphates as substrates. The polypeptide is DNA-directed RNA polymerase subunit Rpo3 (Pyrobaculum islandicum (strain DSM 4184 / JCM 9189 / GEO3)).